The following is a 407-amino-acid chain: Zinc finger protein 174 (407 aa).

The interval 1 to 20 (MAAKMEITLSSNTEASSKQE) is disordered. A Glycyl lysine isopeptide (Lys-Gly) (interchain with G-Cter in SUMO2) cross-link involves residue Lys-26. Positions 59-124 (GPQEALSQLR…KEIVTLVEDF (66 aa)) constitute an SCAN box domain. The segment at 150-270 (GSQLGEQELP…RRQVSSPNAQ (121 aa)) is disordered. Lys-204 participates in a covalent cross-link: Glycyl lysine isopeptide (Lys-Gly) (interchain with G-Cter in SUMO2). Over residues 211–221 (PRMRSDNKENP) the composition is skewed to basic and acidic residues. Glycyl lysine isopeptide (Lys-Gly) (interchain with G-Cter in SUMO2) cross-links involve residues Lys-230 and Lys-271. 3 C2H2-type zinc fingers span residues 326–348 (YKCD…KRVH), 354–376 (YTCG…QRIH), and 382–405 (YQCG…RLHH).

This sequence belongs to the krueppel C2H2-type zinc-finger protein family. Homodimer. Expressed in a variety of organs, but most strongly in adult testis and ovary followed by small intestine, colon, prostate, thymus, spleen, pancreas, skeletal muscle, heart, brain and kidney. Also expressed in umbilical vein endothelial cells, foreskin fibroblast and Hep-G2 cells.

Its subcellular location is the nucleus. Transcriptional repressor. The protein is Zinc finger protein 174 (ZNF174) of Homo sapiens (Human).